We begin with the raw amino-acid sequence, 101 residues long: Small ubiquitin-related modifier 1 (101 aa).

In terms of domain architecture, Ubiquitin-like spans 20-97; that stretch reads EYIKLKVIGQ…IEVYQEQTGG (78 aa). A Glycyl lysine isopeptide (Gly-Lys) (interchain with K-? in acceptor proteins) cross-link involves residue G97. Positions 98-101 are excised as a propeptide; sequence HSTV.

It belongs to the ubiquitin family. SUMO subfamily. As to quaternary structure, interacts with SAE2, UBE2I, RANBP2, PIAS1 and PIAS2. Covalently attached to a number of proteins. In terms of processing, cleavage of precursor form by a sentrin-specific protease is necessary for function.

Its subcellular location is the nucleus membrane. The protein resides in the nucleus speckle. It is found in the cytoplasm. The protein localises to the nucleus. It localises to the PML body. Its subcellular location is the cell membrane. Its function is as follows. Ubiquitin-like protein that can be covalently attached to proteins as a monomer or a lysine-linked polymer. Covalent attachment via an isopeptide bond to its substrates requires prior activation by the E1 complex SAE1-SAE2 and linkage to the E2 enzyme UBE2I. This post-translational modification on lysine residues of proteins plays a crucial role in a number of cellular processes such as nuclear transport, DNA replication and repair, mitosis and signal transduction. Polymeric SUMO1 chains are also susceptible to polyubiquitination which functions as a signal for proteasomal degradation of modified proteins. In Gallus gallus (Chicken), this protein is Small ubiquitin-related modifier 1 (SUMO1).